A 156-amino-acid chain; its full sequence is Small ribosomal subunit protein uS7 (156 aa).

The protein belongs to the universal ribosomal protein uS7 family. Part of the 30S ribosomal subunit. Contacts proteins S9 and S11.

Its function is as follows. One of the primary rRNA binding proteins, it binds directly to 16S rRNA where it nucleates assembly of the head domain of the 30S subunit. Is located at the subunit interface close to the decoding center, probably blocks exit of the E-site tRNA. The sequence is that of Small ribosomal subunit protein uS7 from Saccharophagus degradans (strain 2-40 / ATCC 43961 / DSM 17024).